The chain runs to 378 residues: Glutamate 5-kinase (378 aa).

Lys20 contributes to the ATP binding site. Residues Ser60, Asp147, and Asn159 each contribute to the substrate site. Residues 179-180 (TD) and 221-227 (TGGMLTK) each bind ATP. The PUA domain occupies 286–364 (RGRVVLDDGA…SQIARILGSM (79 aa)).

This sequence belongs to the glutamate 5-kinase family.

It localises to the cytoplasm. The catalysed reaction is L-glutamate + ATP = L-glutamyl 5-phosphate + ADP. It functions in the pathway amino-acid biosynthesis; L-proline biosynthesis; L-glutamate 5-semialdehyde from L-glutamate: step 1/2. Functionally, catalyzes the transfer of a phosphate group to glutamate to form L-glutamate 5-phosphate. The chain is Glutamate 5-kinase from Bordetella pertussis (strain Tohama I / ATCC BAA-589 / NCTC 13251).